The following is a 222-amino-acid chain: Vacuolar protein sorting-associated protein 2 homolog 2 (222 aa).

2 coiled-coil regions span residues 26–83 and 143–222; these read RGIE…AQIR and SEAI…LRRI. The tract at residues 179–222 is disordered; that stretch reads SSAPKGRIATKTAAPPASTAATNKNSESSEVDELEKRLASLRRI. The segment covering 187-203 has biased composition (low complexity); that stretch reads ATKTAAPPASTAATNKN.

This sequence belongs to the SNF7 family. Component of the endosomal sorting required for transport complex III (ESCRT-III), composed at least of VPS2, VPS20, VPS24 and VPS32. Interacts with CHMP1A, CHMP1B and VPS60-1.

The protein localises to the endosome. Functionally, component of the ESCRT-III complex, which is required for multivesicular bodies (MVBs) formation and sorting of endosomal cargo proteins into MVBs. The ESCRT-III complex is probably involved in the concentration of MVB cargo. This is Vacuolar protein sorting-associated protein 2 homolog 2 (VPS2.2) from Arabidopsis thaliana (Mouse-ear cress).